We begin with the raw amino-acid sequence, 469 residues long: Glutamate--tRNA ligase (469 aa).

Positions 9–19 (PSPTGFLHVGG) match the 'HIGH' region motif. Cys98, Cys100, Cys125, and Asp127 together coordinate Zn(2+). Residues 236–240 (KLSKR) carry the 'KMSKS' region motif. An ATP-binding site is contributed by Lys239.

It belongs to the class-I aminoacyl-tRNA synthetase family. Glutamate--tRNA ligase type 1 subfamily. Monomer. Zn(2+) is required as a cofactor.

Its subcellular location is the cytoplasm. It carries out the reaction tRNA(Glu) + L-glutamate + ATP = L-glutamyl-tRNA(Glu) + AMP + diphosphate. In terms of biological role, catalyzes the attachment of glutamate to tRNA(Glu) in a two-step reaction: glutamate is first activated by ATP to form Glu-AMP and then transferred to the acceptor end of tRNA(Glu). The polypeptide is Glutamate--tRNA ligase (Shewanella woodyi (strain ATCC 51908 / MS32)).